A 519-amino-acid chain; its full sequence is MRNSAMQQLNPSEISALIKQRIGDLDTSATAKNEGTIVMVSDGIVRIHGLADAMYGEMIEFDGGLFGMALNLEQDSVGAVVLGNYLSLQEGQKARCTGRVLEVPVGPELLGRVVDALGNPIDGKGPIDAKLTDAVEKVAPGVIWRQSVDEPVQTGYKSVDTMIPVGRGQRELIIGDRQTGKTAMAIDAIIAQKHSGIKCVYVAIGQKQSTIANVVRKLEETGAMAYTTVVAAAAADPAAMQYLAPYSGCTMGEYFRDRGEDALIIYDDLSKQAVAYRQISLLLRRPPGREAYPGDVFYLHSRLLERASRVSADYVEKFTNGAVTGQTGSLTALPIIETQAGDVSAFVPTNVISITDGQIFLETSLFNAGIRPAVNAGISVSRVGGSAQTKIIKKLSGGIRTALAQYRELAAFAQFASDLDEATRKQLEHGQRVTELMKQKQYAPYSIADQAVSVYASNEGYMADVEVKKIVDFDAALISYFRSEYAPLMKQIDETGDYNKDIEAAIKSGIESFKATQTY.

175 to 182 (GDRQTGKT) contributes to the ATP binding site.

It belongs to the ATPase alpha/beta chains family. F-type ATPases have 2 components, CF(1) - the catalytic core - and CF(0) - the membrane proton channel. CF(1) has five subunits: alpha(3), beta(3), gamma(1), delta(1), epsilon(1). CF(0) has three main subunits: a(1), b(2) and c(9-12). The alpha and beta chains form an alternating ring which encloses part of the gamma chain. CF(1) is attached to CF(0) by a central stalk formed by the gamma and epsilon chains, while a peripheral stalk is formed by the delta and b chains.

Its subcellular location is the cell inner membrane. It carries out the reaction ATP + H2O + 4 H(+)(in) = ADP + phosphate + 5 H(+)(out). Functionally, produces ATP from ADP in the presence of a proton gradient across the membrane. The alpha chain is a regulatory subunit. This chain is ATP synthase subunit alpha, found in Acinetobacter baylyi (strain ATCC 33305 / BD413 / ADP1).